The primary structure comprises 254 residues: NAD kinase (254 aa).

The active-site Proton acceptor is the aspartate 44. NAD(+) is bound by residues 44-45, 114-115, aspartate 144, alanine 152, 155-160, and alanine 179; these read DG, NE, and TAYNYS.

This sequence belongs to the NAD kinase family. A divalent metal cation is required as a cofactor.

It localises to the cytoplasm. It catalyses the reaction NAD(+) + ATP = ADP + NADP(+) + H(+). Functionally, involved in the regulation of the intracellular balance of NAD and NADP, and is a key enzyme in the biosynthesis of NADP. Catalyzes specifically the phosphorylation on 2'-hydroxyl of the adenosine moiety of NAD to yield NADP. The sequence is that of NAD kinase from Cereibacter sphaeroides (strain ATCC 17029 / ATH 2.4.9) (Rhodobacter sphaeroides).